The following is a 126-amino-acid chain: Fluoride-specific ion channel FluC (126 aa).

The next 4 helical transmembrane spans lie at 9-29 (LAVF…GFQL), 35-55 (LTAT…LYAI), 63-83 (LLHL…SFVL), and 94-114 (WSIG…AAIL). Na(+)-binding residues include Gly73 and Ser76.

The protein belongs to the fluoride channel Fluc/FEX (TC 1.A.43) family.

Its subcellular location is the cell inner membrane. The catalysed reaction is fluoride(in) = fluoride(out). Its activity is regulated as follows. Na(+) is not transported, but it plays an essential structural role and its presence is essential for fluoride channel function. Its function is as follows. Fluoride-specific ion channel. Important for reducing fluoride concentration in the cell, thus reducing its toxicity. This Ruegeria pomeroyi (strain ATCC 700808 / DSM 15171 / DSS-3) (Silicibacter pomeroyi) protein is Fluoride-specific ion channel FluC.